The primary structure comprises 425 residues: tRNA(Ile)-lysidine synthase (425 aa).

ATP is bound at residue 27 to 32 (SGGLDS).

This sequence belongs to the tRNA(Ile)-lysidine synthase family.

It is found in the cytoplasm. The catalysed reaction is cytidine(34) in tRNA(Ile2) + L-lysine + ATP = lysidine(34) in tRNA(Ile2) + AMP + diphosphate + H(+). Functionally, ligates lysine onto the cytidine present at position 34 of the AUA codon-specific tRNA(Ile) that contains the anticodon CAU, in an ATP-dependent manner. Cytidine is converted to lysidine, thus changing the amino acid specificity of the tRNA from methionine to isoleucine. The polypeptide is tRNA(Ile)-lysidine synthase (Streptococcus sanguinis (strain SK36)).